The primary structure comprises 214 residues: tRNA (guanine-N(7)-)-methyltransferase (214 aa).

Residues E45, D70, N97, and N119 each contribute to the S-adenosyl-L-methionine site. Substrate is bound at residue K123. Positions 125–130 (RHNKRR) are interaction with RNA. Substrate-binding positions include D155 and 193 to 196 (TEYE).

The protein belongs to the class I-like SAM-binding methyltransferase superfamily. TrmB family.

The enzyme catalyses guanosine(46) in tRNA + S-adenosyl-L-methionine = N(7)-methylguanosine(46) in tRNA + S-adenosyl-L-homocysteine. It participates in tRNA modification; N(7)-methylguanine-tRNA biosynthesis. Its function is as follows. Catalyzes the formation of N(7)-methylguanine at position 46 (m7G46) in tRNA. The chain is tRNA (guanine-N(7)-)-methyltransferase from Clostridium novyi (strain NT).